Reading from the N-terminus, the 544-residue chain is CTP synthase (544 aa).

Positions 1-266 (MIRYIFITGG…DSEVLSHFGI (266 aa)) are amidoligase domain. Ser13 contacts CTP. Ser13 is a UTP binding site. ATP contacts are provided by residues 14–19 (SLGKGI) and Asp71. The Mg(2+) site is built by Asp71 and Glu140. Residues 147–149 (DIE), 187–192 (KTKPTQ), and Lys223 each bind CTP. UTP is bound by residues 187 to 192 (KTKPTQ) and Lys223. Residue 239–241 (RDV) coordinates ATP. In terms of domain architecture, Glutamine amidotransferase type-1 spans 292 to 543 (TIGLVGKYTD…IAAAVKQSRL (252 aa)). Residue Gly355 participates in L-glutamine binding. Cys382 functions as the Nucleophile; for glutamine hydrolysis in the catalytic mechanism. L-glutamine-binding positions include 383–386 (YGMQ), Glu406, and Arg471. Active-site residues include His516 and Glu518.

It belongs to the CTP synthase family. Homotetramer.

The catalysed reaction is UTP + L-glutamine + ATP + H2O = CTP + L-glutamate + ADP + phosphate + 2 H(+). It carries out the reaction L-glutamine + H2O = L-glutamate + NH4(+). The enzyme catalyses UTP + NH4(+) + ATP = CTP + ADP + phosphate + 2 H(+). It participates in pyrimidine metabolism; CTP biosynthesis via de novo pathway; CTP from UDP: step 2/2. Allosterically activated by GTP, when glutamine is the substrate; GTP has no effect on the reaction when ammonia is the substrate. The allosteric effector GTP functions by stabilizing the protein conformation that binds the tetrahedral intermediate(s) formed during glutamine hydrolysis. Inhibited by the product CTP, via allosteric rather than competitive inhibition. Functionally, catalyzes the ATP-dependent amination of UTP to CTP with either L-glutamine or ammonia as the source of nitrogen. Regulates intracellular CTP levels through interactions with the four ribonucleotide triphosphates. The protein is CTP synthase of Hyphomonas neptunium (strain ATCC 15444).